A 293-amino-acid polypeptide reads, in one-letter code: Outer membrane protein assembly factor BamD (293 aa).

Residues 1 to 26 form the signal peptide; sequence MIQRPTFFSPIHLLAVLLATFILITG. A lipid anchor (N-palmitoyl cysteine) is attached at C27. C27 carries S-diacylglycerol cysteine lipidation.

The protein belongs to the BamD family. In terms of assembly, part of the Bam complex.

It localises to the cell outer membrane. Its function is as follows. Part of the outer membrane protein assembly complex, which is involved in assembly and insertion of beta-barrel proteins into the outer membrane. This chain is Outer membrane protein assembly factor BamD, found in Xylella fastidiosa (strain Temecula1 / ATCC 700964).